The chain runs to 185 residues: Intraflagellar transport protein 22 homolog (185 aa).

Residues 10–17 (GPCESGKT), 63–67 (DCGGD), and 123–126 (HKPG) contribute to the GTP site. The residue at position 137 (Ser-137) is a Phosphoserine.

Belongs to the small GTPase superfamily. Rab family. As to quaternary structure, component of the IFT complex B, at least composed of IFT20, IFT22, IFT25, IFT27, IFT46, IFT52, TRAF3IP1/IFT54, IFT57, IFT74, IFT80, IFT81, and IFT88. Interacts with IFT88. Interacts with CFAP61.

It localises to the cell projection. The protein localises to the cilium. Small GTPase-like component of the intraflagellar transport (IFT) complex B. In Macaca fascicularis (Crab-eating macaque), this protein is Intraflagellar transport protein 22 homolog (IFT22).